Reading from the N-terminus, the 539-residue chain is Putative cysteine ligase BshC (539 aa).

The stretch at 455–475 forms a coiled coil; that stretch reads LQKNAAFIQDQLLFLERTVTK.

This sequence belongs to the BshC family.

Its function is as follows. Involved in bacillithiol (BSH) biosynthesis. May catalyze the last step of the pathway, the addition of cysteine to glucosamine malate (GlcN-Mal) to generate BSH. The sequence is that of Putative cysteine ligase BshC from Bacillus velezensis (strain DSM 23117 / BGSC 10A6 / LMG 26770 / FZB42) (Bacillus amyloliquefaciens subsp. plantarum).